The following is a 610-amino-acid chain: MTNFSESEISEFKASFNQFDENGDGQISALELQKILTKCGEKVTGVEVRDMIKEVDTDGNGSIDFKEFLQVMQKARQHSANASPAFASAVKKVGAVNTIGGYSGSTASGVQHSYSDEEKVAYIDWINNCLAKDVDLKSRLPIPEDGDKFFAACNDGLLLCKLINDAVPDTIDERVLNKKNLNAFRINENQVLCINSAKAIGCNVVNIGAGDLVEGRAHLIMGLTWQIIKIGLFARINLTNHPELYRLLHDGETIEDLLKLPVEEILLRWFNYHLAAAGSQRRVKNFSGDIKDSECYTILLKQIAPKDAGVETSALNISNLDQRAVKVLENADKLGCKKFLKPKDIVTGFQKLNLAFVANLFNTHPALEPVEDVVIIEETREEKTFRNWMNSLGVDPFVNNLYEGTYDGLILIQLFDKIYPGLVDHKKVNYPPYKAMGAEMKKIENCNYAIQLGKDCKYSLVGIDGKNVYDKNKTLTLSILWQLMRGHVISILTALSGSGKPIADADIVNWTNSKLSAAGKKQISGFKDSTISTGIPILDVIEAVRPGSVDPALVATSGSAEDNLLNAKLAVSTARKVGAVVFALPEDIVEVKPKMVLTLFASLWQVEMTK.

2 consecutive EF-hand domains span residues Ser7 to Lys42 and Val43 to His78. Asp20, Asn22, Asp24, Gln26, Glu31, Asp56, Asp58, Asn60, Ser62, and Glu67 together coordinate Ca(2+). Actin-binding stretches follow at residues Tyr102 to Pro365 and Ala366 to Met608. Calponin-homology (CH) domains are found at residues Asp116–Leu232, Leu260–Pro365, Thr379–Val488, and Pro501–Met608.

Its function is as follows. Binds to actin. This chain is Fimbrin (fimA), found in Dictyostelium discoideum (Social amoeba).